Consider the following 447-residue polypeptide: Divalent metal cation transporter MntH (447 aa).

11 consecutive transmembrane segments (helical) span residues 26 to 48 (AGFW…GYMD), 65 to 85 (TLLS…AMSA), 108 to 128 (GFLL…AEII), 140 to 160 (IPLI…LLLM), 169 to 189 (AIVA…VLLS), 212 to 232 (MLYL…LYLG), 264 to 284 (LFLA…LFYG), 304 to 324 (IVGA…LLAS), 359 to 379 (VLSV…EAKI), 383 to 403 (LTFS…PLVI), and 426 to 446 (TATI…LGLI).

This sequence belongs to the NRAMP family.

The protein localises to the cell membrane. In terms of biological role, h(+)-stimulated, divalent metal cation uptake system. The protein is Divalent metal cation transporter MntH of Pediococcus pentosaceus (strain ATCC 25745 / CCUG 21536 / LMG 10740 / 183-1w).